Reading from the N-terminus, the 274-residue chain is 3-deoxy-manno-octulosonate cytidylyltransferase (274 aa).

Belongs to the KdsB family.

It localises to the cytoplasm. It carries out the reaction 3-deoxy-alpha-D-manno-oct-2-ulosonate + CTP = CMP-3-deoxy-beta-D-manno-octulosonate + diphosphate. It participates in nucleotide-sugar biosynthesis; CMP-3-deoxy-D-manno-octulosonate biosynthesis; CMP-3-deoxy-D-manno-octulosonate from 3-deoxy-D-manno-octulosonate and CTP: step 1/1. The protein operates within bacterial outer membrane biogenesis; lipopolysaccharide biosynthesis. Functionally, activates KDO (a required 8-carbon sugar) for incorporation into bacterial lipopolysaccharide in Gram-negative bacteria. The sequence is that of 3-deoxy-manno-octulosonate cytidylyltransferase from Bordetella avium (strain 197N).